Reading from the N-terminus, the 95-residue chain is uncharacterized protein (95 aa).

This is an uncharacterized protein from Acidianus hospitalis (AFV-1).